We begin with the raw amino-acid sequence, 230 residues long: Large ribosomal subunit protein uL1 (230 aa).

It belongs to the universal ribosomal protein uL1 family. Part of the 50S ribosomal subunit.

Binds directly to 23S rRNA. The L1 stalk is quite mobile in the ribosome, and is involved in E site tRNA release. Its function is as follows. Protein L1 is also a translational repressor protein, it controls the translation of the L11 operon by binding to its mRNA. In Sulfurimonas denitrificans (strain ATCC 33889 / DSM 1251) (Thiomicrospira denitrificans (strain ATCC 33889 / DSM 1251)), this protein is Large ribosomal subunit protein uL1.